The primary structure comprises 191 residues: Adenine phosphoribosyltransferase (191 aa).

This sequence belongs to the purine/pyrimidine phosphoribosyltransferase family. In terms of assembly, homodimer.

The protein resides in the cytoplasm. It catalyses the reaction AMP + diphosphate = 5-phospho-alpha-D-ribose 1-diphosphate + adenine. It participates in purine metabolism; AMP biosynthesis via salvage pathway; AMP from adenine: step 1/1. In terms of biological role, catalyzes a salvage reaction resulting in the formation of AMP, that is energically less costly than de novo synthesis. This chain is Adenine phosphoribosyltransferase, found in Clavibacter sepedonicus (Clavibacter michiganensis subsp. sepedonicus).